A 474-amino-acid chain; its full sequence is tRNA-2-methylthio-N(6)-dimethylallyladenosine synthase (474 aa).

One can recognise an MTTase N-terminal domain in the interval 3–120 (KKLHIKTWGC…LPEMIEQVRR (118 aa)). Residues Cys-12, Cys-49, Cys-83, Cys-157, Cys-161, and Cys-164 each coordinate [4Fe-4S] cluster. Positions 143 to 375 (RAEGPTAFVS…QDRITQQAMR (233 aa)) constitute a Radical SAM core domain. Residues 378 to 441 (RHMMGTVQRI…TNSLRGVFIR (64 aa)) form the TRAM domain.

It belongs to the methylthiotransferase family. MiaB subfamily. As to quaternary structure, monomer. It depends on [4Fe-4S] cluster as a cofactor.

It is found in the cytoplasm. The enzyme catalyses N(6)-dimethylallyladenosine(37) in tRNA + (sulfur carrier)-SH + AH2 + 2 S-adenosyl-L-methionine = 2-methylsulfanyl-N(6)-dimethylallyladenosine(37) in tRNA + (sulfur carrier)-H + 5'-deoxyadenosine + L-methionine + A + S-adenosyl-L-homocysteine + 2 H(+). Functionally, catalyzes the methylthiolation of N6-(dimethylallyl)adenosine (i(6)A), leading to the formation of 2-methylthio-N6-(dimethylallyl)adenosine (ms(2)i(6)A) at position 37 in tRNAs that read codons beginning with uridine. This Shewanella baltica (strain OS155 / ATCC BAA-1091) protein is tRNA-2-methylthio-N(6)-dimethylallyladenosine synthase.